A 399-amino-acid chain; its full sequence is MSQYRTFTAQDAVEYAKQFGGLDNPSSLVEAQEIGDGNLNLVFKIFDAQGVSRIIVKQALPYVRCVGESWPLTLDRARLEAQTLVEHYQHSPQHTVKIHHYDPELAVMVMEDLSSHKIWRGELISGVYYPQASRQLGEYLAHTLFHTSDFYLHPHAKKAQVAKYINPEMCEITEDLFFNDPYQIHERNNYPAELEADVAALRSDDQLKIAVASLKHRFFSQAEALLHGDIHSGSIFVAEDSLKAIDAEFGYYGPIGFDIGTAIGNLLLNFCGLPGHLGIRDAAAAREQRLTDIQELWNTFSERFQALATEKTRDAALSVPGYASQFLKKVWTDAIGFCGTELIRRSVGLSHVADIDTIKDDAMRHECLRHAITLGKALIVIADRIDSAEALVARVRQYS.

Residues Asn40, Lys57, and 111-113 (EDL) each bind ATP. Asp229 provides a ligand contact to substrate. ATP is bound at residue 246 to 248 (DAE). Arg344 provides a ligand contact to substrate.

Belongs to the methylthioribose kinase family. Homodimer.

The enzyme catalyses 5-(methylsulfanyl)-D-ribose + ATP = 5-(methylsulfanyl)-alpha-D-ribose 1-phosphate + ADP + H(+). Its pathway is amino-acid biosynthesis; L-methionine biosynthesis via salvage pathway; S-methyl-5-thio-alpha-D-ribose 1-phosphate from S-methyl-5'-thioadenosine (hydrolase route): step 2/2. In terms of biological role, catalyzes the phosphorylation of methylthioribose into methylthioribose-1-phosphate. The protein is Methylthioribose kinase of Enterobacter sp. (strain 638).